The chain runs to 330 residues: Ketol-acid reductoisomerase (NADP(+)) (330 aa).

The region spanning 1 to 181 is the KARI N-terminal Rossmann domain; the sequence is MNVYYEQDAD…GGTKAGVIET (181 aa). Residues 24-27, arginine 47, serine 50, serine 52, and 82-85 each bind NADP(+); these read YGSQ and DQNQ. Histidine 107 is a catalytic residue. Glycine 133 contributes to the NADP(+) binding site. The KARI C-terminal knotted domain maps to 182 to 327; it reads SIKNETETDL…AKLRDMMSWL (146 aa). Mg(2+) is bound by residues aspartate 190, glutamate 194, glutamate 226, and glutamate 230. Serine 251 contributes to the substrate binding site.

Belongs to the ketol-acid reductoisomerase family. The cofactor is Mg(2+).

The catalysed reaction is (2R)-2,3-dihydroxy-3-methylbutanoate + NADP(+) = (2S)-2-acetolactate + NADPH + H(+). It carries out the reaction (2R,3R)-2,3-dihydroxy-3-methylpentanoate + NADP(+) = (S)-2-ethyl-2-hydroxy-3-oxobutanoate + NADPH + H(+). It participates in amino-acid biosynthesis; L-isoleucine biosynthesis; L-isoleucine from 2-oxobutanoate: step 2/4. Its pathway is amino-acid biosynthesis; L-valine biosynthesis; L-valine from pyruvate: step 2/4. Functionally, involved in the biosynthesis of branched-chain amino acids (BCAA). Catalyzes an alkyl-migration followed by a ketol-acid reduction of (S)-2-acetolactate (S2AL) to yield (R)-2,3-dihydroxy-isovalerate. In the isomerase reaction, S2AL is rearranged via a Mg-dependent methyl migration to produce 3-hydroxy-3-methyl-2-ketobutyrate (HMKB). In the reductase reaction, this 2-ketoacid undergoes a metal-dependent reduction by NADPH to yield (R)-2,3-dihydroxy-isovalerate. The polypeptide is Ketol-acid reductoisomerase (NADP(+)) (Pelodictyon phaeoclathratiforme (strain DSM 5477 / BU-1)).